Reading from the N-terminus, the 566-residue chain is Urease subunit alpha (566 aa).

One can recognise a Urease domain in the interval G128–F566. Residues H133, H135, and K216 each coordinate Ni(2+). The residue at position 216 (K216) is an N6-carboxylysine. H218 contributes to the substrate binding site. H245 and H271 together coordinate Ni(2+). Residue H319 is the Proton donor of the active site. Position 359 (D359) interacts with Ni(2+).

The protein belongs to the metallo-dependent hydrolases superfamily. Urease alpha subunit family. In terms of assembly, heterotrimer of UreA (gamma), UreB (beta) and UreC (alpha) subunits. Three heterotrimers associate to form the active enzyme. The cofactor is Ni cation. Carboxylation allows a single lysine to coordinate two nickel ions.

The protein localises to the cytoplasm. The enzyme catalyses urea + 2 H2O + H(+) = hydrogencarbonate + 2 NH4(+). The protein operates within nitrogen metabolism; urea degradation; CO(2) and NH(3) from urea (urease route): step 1/1. This is Urease subunit alpha from Pseudomonas fluorescens (strain Pf0-1).